Here is a 286-residue protein sequence, read N- to C-terminus: Lipid phosphate phosphatase epsilon 2, chloroplastic (286 aa).

Residues 1-60 constitute a chloroplast transit peptide; the sequence is MAASSSSLLLLHKPTYNFHFAASSVPTYINSARFRISSSIFPLDRRRRRRIWSVSGFKSM. The next 5 membrane-spanning stretches (helical) occupy residues 133–149, 173–193, 194–214, 226–246, and 260–280; these read LWAVIGSVSNSVLSVAL, AQSISFISVFSVFSVMEWLGT, NVLSLFLSGFILALGSYFTWL, VVVGAIVGSVYSTLWYVTWNS, and IALFLVAAASALGFAVYVLLN.

It belongs to the PA-phosphatase related phosphoesterase family. As to expression, expressed in root tips, root branch points, cotyledons and leaves.

The protein resides in the plastid. Its subcellular location is the chloroplast inner membrane. Its activity is regulated as follows. Inhibited by Mg(2+). In terms of biological role, exhibits phosphatidate phosphatase (PAP) activity in vitro. May play a secondary role as PAP in plastids. The chain is Lipid phosphate phosphatase epsilon 2, chloroplastic (LPPE2) from Arabidopsis thaliana (Mouse-ear cress).